We begin with the raw amino-acid sequence, 551 residues long: Glucose-6-phosphate isomerase 2 (551 aa).

Glutamate 353 functions as the Proton donor in the catalytic mechanism. Residues histidine 384 and lysine 512 contribute to the active site.

This sequence belongs to the GPI family.

Its subcellular location is the cytoplasm. The enzyme catalyses alpha-D-glucose 6-phosphate = beta-D-fructose 6-phosphate. Its pathway is carbohydrate biosynthesis; gluconeogenesis. The protein operates within carbohydrate degradation; glycolysis; D-glyceraldehyde 3-phosphate and glycerone phosphate from D-glucose: step 2/4. Functionally, catalyzes the reversible isomerization of glucose-6-phosphate to fructose-6-phosphate. The protein is Glucose-6-phosphate isomerase 2 of Colwellia psychrerythraea (strain 34H / ATCC BAA-681) (Vibrio psychroerythus).